The primary structure comprises 638 residues: 1,4-alpha-glucan branching enzyme GlgB (638 aa).

The active-site Nucleophile is the Asp-320. Catalysis depends on Glu-373, which acts as the Proton donor.

The protein belongs to the glycosyl hydrolase 13 family. GlgB subfamily. In terms of assembly, monomer.

It carries out the reaction Transfers a segment of a (1-&gt;4)-alpha-D-glucan chain to a primary hydroxy group in a similar glucan chain.. It functions in the pathway glycan biosynthesis; glycogen biosynthesis. In terms of biological role, catalyzes the formation of the alpha-1,6-glucosidic linkages in glycogen by scission of a 1,4-alpha-linked oligosaccharide from growing alpha-1,4-glucan chains and the subsequent attachment of the oligosaccharide to the alpha-1,6 position. The sequence is that of 1,4-alpha-glucan branching enzyme GlgB from Oleidesulfovibrio alaskensis (strain ATCC BAA-1058 / DSM 17464 / G20) (Desulfovibrio alaskensis).